The sequence spans 212 residues: Uridine kinase (212 aa).

13-20 (GASASGKS) contacts ATP.

This sequence belongs to the uridine kinase family.

The protein localises to the cytoplasm. It carries out the reaction uridine + ATP = UMP + ADP + H(+). It catalyses the reaction cytidine + ATP = CMP + ADP + H(+). Its pathway is pyrimidine metabolism; CTP biosynthesis via salvage pathway; CTP from cytidine: step 1/3. The protein operates within pyrimidine metabolism; UMP biosynthesis via salvage pathway; UMP from uridine: step 1/1. This chain is Uridine kinase, found in Psychromonas ingrahamii (strain DSM 17664 / CCUG 51855 / 37).